The following is a 447-amino-acid chain: Signal recognition particle 54 kDa protein (447 aa).

Residues 103–110 (GVQGSGKT), 185–189 (DTAGR), and 245–248 (TKMD) each bind GTP.

The protein belongs to the GTP-binding SRP family. SRP54 subfamily. In terms of assembly, part of the signal recognition particle protein translocation system, which is composed of SRP and FtsY. Archaeal SRP consists of a 7S RNA molecule of 300 nucleotides and two protein subunits: SRP54 and SRP19.

The protein resides in the cytoplasm. The enzyme catalyses GTP + H2O = GDP + phosphate + H(+). In terms of biological role, involved in targeting and insertion of nascent membrane proteins into the cytoplasmic membrane. Binds to the hydrophobic signal sequence of the ribosome-nascent chain (RNC) as it emerges from the ribosomes. The SRP-RNC complex is then targeted to the cytoplasmic membrane where it interacts with the SRP receptor FtsY. The chain is Signal recognition particle 54 kDa protein from Saccharolobus islandicus (strain Y.G.57.14 / Yellowstone #1) (Sulfolobus islandicus).